The chain runs to 114 residues: Procyclic form-specific polypeptide A-alpha (114 aa).

Residues 1–27 (MAPRSLYLLAILLFSANLFAGVGFAAA) form the signal peptide. The disordered stretch occupies residues 33 to 95 (SNVIVKGGKG…EPEPEPGAAT (63 aa)). A compositionally biased stretch (acidic residues) spans 47–89 (DGPEEPEETGPEETGPEETGPEETGPEETGPEETGPEETEPEP). 7 repeat units span residues 48–52 (GPEEP), 56–60 (GPEET), 61–65 (GPEET), 66–70 (GPEET), 71–75 (GPEET), 76–80 (GPEET), and 81–85 (GPEET). The segment at 48–85 (GPEEPEETGPEETGPEETGPEETGPEETGPEETGPEET) is 7 X 5 AA tandem repeats of G-P-E-E-[PT]. Gly-92 carries GPI-anchor amidated glycine lipidation. A propeptide spanning residues 93–114 (AATLKSVALPFAVAAAALVAAF) is cleaved from the precursor.

The protein resides in the cell membrane. Its function is as follows. Major surface antigen of procyclic forms. This is Procyclic form-specific polypeptide A-alpha (PARPA-ALPHA) from Trypanosoma brucei brucei.